A 626-amino-acid polypeptide reads, in one-letter code: Chaperone protein HtpG (626 aa).

Residues 1–339 (MSTNQETRGF…SNDLPLNVSR (339 aa)) form an a; substrate-binding region. Positions 340–555 (EILQDNKVTA…NDQMTTQMAK (216 aa)) are b. The segment at 556–626 (LFAAAGQPVP…FIKRINKLLG (71 aa)) is c.

This sequence belongs to the heat shock protein 90 family. In terms of assembly, homodimer.

Its subcellular location is the cytoplasm. In terms of biological role, molecular chaperone. Has ATPase activity. This Aggregatibacter actinomycetemcomitans (Actinobacillus actinomycetemcomitans) protein is Chaperone protein HtpG.